The primary structure comprises 95 residues: Aspartyl/glutamyl-tRNA(Asn/Gln) amidotransferase subunit C (95 aa).

It belongs to the GatC family. As to quaternary structure, heterotrimer of A, B and C subunits.

It carries out the reaction L-glutamyl-tRNA(Gln) + L-glutamine + ATP + H2O = L-glutaminyl-tRNA(Gln) + L-glutamate + ADP + phosphate + H(+). It catalyses the reaction L-aspartyl-tRNA(Asn) + L-glutamine + ATP + H2O = L-asparaginyl-tRNA(Asn) + L-glutamate + ADP + phosphate + 2 H(+). Its function is as follows. Allows the formation of correctly charged Asn-tRNA(Asn) or Gln-tRNA(Gln) through the transamidation of misacylated Asp-tRNA(Asn) or Glu-tRNA(Gln) in organisms which lack either or both of asparaginyl-tRNA or glutaminyl-tRNA synthetases. The reaction takes place in the presence of glutamine and ATP through an activated phospho-Asp-tRNA(Asn) or phospho-Glu-tRNA(Gln). This is Aspartyl/glutamyl-tRNA(Asn/Gln) amidotransferase subunit C from Methylorubrum populi (strain ATCC BAA-705 / NCIMB 13946 / BJ001) (Methylobacterium populi).